We begin with the raw amino-acid sequence, 628 residues long: Vacuolar-sorting receptor 4 (628 aa).

The first 24 residues, 1–24 (MKQLLCYLPWLLLLSLVVSPFNEA), serve as a signal peptide directing secretion. At 25 to 569 (RFVVEKNSLS…SKTGSQVKSA (545 aa)) the chain is on the lumenal side. Positions 56-168 (QYGGSMAGTV…GFGEKLKKAI (113 aa)) constitute a PA domain. N-linked (GlcNAc...) asparagine glycans are attached at residues N148, N294, and N434. EGF-like domains follow at residues 416-466 (ETNE…SHCE) and 469-516 (GPGR…KKCE). Cystine bridges form between C420–C438, C427–C447, C449–C465, C473–C493, C480–C501, C503–C515, and C545–C558. The EGF-like 3; calcium-binding domain occupies 517–559 (DINECKEKKACQCPECSCKNTWGSYECSCSGDLLYMRDHDTCI). Residues 570–590 (WAAVWLIMLSLGLAAAGAYLV) traverse the membrane as a helical segment. Residues 591-628 (YKYRLRQYMDSEIRAIMAQYMPLDSQPEVPNHTNDERA) lie on the Cytoplasmic side of the membrane. Positions 610–613 (YMPL) match the Tyrosine-based internalization motif motif.

This sequence belongs to the VSR (BP-80) family. As to expression, expressed at low levels in seeds, seedlings, roots, stems, leaves, flowers and siliques.

The protein resides in the membrane. Its subcellular location is the golgi apparatus membrane. It is found in the cytoplasmic vesicle. It localises to the clathrin-coated vesicle membrane. The protein localises to the prevacuolar compartment membrane. Functionally, vacuolar-sorting receptor (VSR) involved in clathrin-coated vesicles sorting from Golgi apparatus to vacuoles. The chain is Vacuolar-sorting receptor 4 (VSR4) from Arabidopsis thaliana (Mouse-ear cress).